We begin with the raw amino-acid sequence, 273 residues long: Ribosomal RNA small subunit methyltransferase A (273 aa).

Residues Asn-19, Leu-21, Gly-46, Glu-71, Asp-94, and Asn-117 each contribute to the S-adenosyl-L-methionine site.

This sequence belongs to the class I-like SAM-binding methyltransferase superfamily. rRNA adenine N(6)-methyltransferase family. RsmA subfamily.

It is found in the cytoplasm. The catalysed reaction is adenosine(1518)/adenosine(1519) in 16S rRNA + 4 S-adenosyl-L-methionine = N(6)-dimethyladenosine(1518)/N(6)-dimethyladenosine(1519) in 16S rRNA + 4 S-adenosyl-L-homocysteine + 4 H(+). Its function is as follows. Specifically dimethylates two adjacent adenosines (A1518 and A1519) in the loop of a conserved hairpin near the 3'-end of 16S rRNA in the 30S particle. May play a critical role in biogenesis of 30S subunits. This Burkholderia ambifaria (strain MC40-6) protein is Ribosomal RNA small subunit methyltransferase A.